Reading from the N-terminus, the 455-residue chain is Differentiation-associated protein 1 (455 aa).

An N-terminal signal peptide occupies residues 1-21 (MKFKLFLLVFFVFLLPYLSQS). A disordered region spans residues 349 to 434 (IGSSSSSSSS…SDDDLGNPSS (86 aa)). Positions 351 to 423 (SSSSSSSSSS…KSNHTSSESS (73 aa)) are enriched in low complexity. The GPI-like-anchor amidated serine moiety is linked to residue Ser-433. A propeptide spans 434–455 (SSSILSVSKLIILLISIILYCF) (removed in mature form).

It is found in the cell membrane. In terms of biological role, plays a role in differentiation. The polypeptide is Differentiation-associated protein 1 (dia1) (Dictyostelium discoideum (Social amoeba)).